Reading from the N-terminus, the 457-residue chain is ERV-H1 provirus ancestral Env polyprotein (457 aa).

Positions 1-35 (MIFAGKAPSNTSTLMKFYSLILYSLLFSFPFLCHP) are cleaved as a signal peptide. 2 N-linked (GlcNAc...) asparagine glycosylation sites follow: Asn10 and Asn47. The CXXC motif lies at 64–67 (CWLC). N-linked (GlcNAc...) asparagine glycosylation is found at Asn197, Asn222, Asn265, Asn283, Asn352, and Asn370. A fusion peptide region spans residues 388-408 (VIPLIPLMFGLGLSASTIALS).

Belongs to the gamma type-C retroviral envelope protein family. HERV class-I H env subfamily. The surface (SU) and transmembrane (TM) proteins form a heterodimer. SU and TM are attached by noncovalent interactions or by a labile interchain disulfide bond. Specific enzymatic cleavages in vivo yield the mature SU and TM proteins. In terms of processing, the CXXC motif is highly conserved across a broad range of retroviral envelope proteins. It is thought to participate in the formation of a labile disulfide bond possibly with the CX6CC motif present in the transmembrane protein.

The protein resides in the virion. Its function is as follows. Retroviral envelope proteins mediate receptor recognition and membrane fusion during early infection. Endogenous envelope proteins may have kept, lost or modified their original function during evolution. Functionally, SU mediates receptor recognition. In terms of biological role, TM anchors the envelope heterodimer to the viral membrane through one transmembrane domain. The other hydrophobic domain, called fusion peptide, mediates fusion of the viral membrane with the target cell membrane. This is ERV-H1 provirus ancestral Env polyprotein from Pan troglodytes (Chimpanzee).